Here is a 627-residue protein sequence, read N- to C-terminus: DNA-directed RNA polymerase subunit gamma (627 aa).

Residues C70, C72, C85, and C88 each contribute to the Zn(2+) site. Residues D468, D470, and D472 each contribute to the Mg(2+) site.

This sequence belongs to the RNA polymerase beta' chain family. RpoC1 subfamily. As to quaternary structure, in cyanobacteria the RNAP catalytic core is composed of 2 alpha, 1 beta, 1 beta', 1 gamma and 1 omega subunit. When a sigma factor is associated with the core the holoenzyme is formed, which can initiate transcription. The cofactor is Mg(2+). It depends on Zn(2+) as a cofactor.

It carries out the reaction RNA(n) + a ribonucleoside 5'-triphosphate = RNA(n+1) + diphosphate. In terms of biological role, DNA-dependent RNA polymerase catalyzes the transcription of DNA into RNA using the four ribonucleoside triphosphates as substrates. The protein is DNA-directed RNA polymerase subunit gamma of Synechococcus sp. (strain JA-2-3B'a(2-13)) (Cyanobacteria bacterium Yellowstone B-Prime).